The primary structure comprises 450 residues: Probable glycosidase CRR1 (450 aa).

An N-terminal signal peptide occupies residues 1–17 (MSKRIIQLILLSAFARA). The GH16 domain maps to 67-347 (SPESCVPVPA…WENAPDIKAH (281 aa)). Catalysis depends on Glu225, which acts as the Nucleophile. Glu229 acts as the Proton donor in catalysis. The interval 428 to 450 (AQRQQHHRRSLPHVEAPPITNTM) is disordered.

The protein belongs to the glycosyl hydrolase 16 family. CRR1 subfamily.

It is found in the spore wall. Its function is as follows. Spore specific glycosidase involved in spore wall assembly during sporulation. May be involved in copper import. The polypeptide is Probable glycosidase CRR1 (CRR1) (Eremothecium gossypii (strain ATCC 10895 / CBS 109.51 / FGSC 9923 / NRRL Y-1056) (Yeast)).